The following is a 274-amino-acid chain: Ciliary microtubule inner protein 2B (274 aa).

2 disordered regions span residues 46–89 (SPGL…SSMV) and 119–171 (TQRN…MDDR). A compositionally biased stretch (basic and acidic residues) spans 130–155 (LPKEAKGEKDVEKDQEPKPEVEKEPE).

This sequence belongs to the CIMIP2 family. Microtubule inner protein component of sperm flagellar doublet microtubules. Expressed in trachea multiciliated cells.

The protein resides in the cytoplasm. It is found in the cytoskeleton. It localises to the cilium axoneme. Its subcellular location is the flagellum axoneme. Its function is as follows. Microtubule inner protein (MIP) part of the dynein-decorated doublet microtubules (DMTs) in cilia axoneme, which is required for motile cilia beating. The polypeptide is Ciliary microtubule inner protein 2B (CIMIP2B) (Bos taurus (Bovine)).